The sequence spans 632 residues: Chaperone protein DnaK (632 aa).

The residue at position 198 (Thr198) is a Phosphothreonine; by autocatalysis. The interval 524 to 557 (RREAVDAKNHADSLVHSTEKALAEHGSKIEDSER) is disordered.

This sequence belongs to the heat shock protein 70 family.

Functionally, acts as a chaperone. The chain is Chaperone protein DnaK from Nitrobacter hamburgensis (strain DSM 10229 / NCIMB 13809 / X14).